Consider the following 393-residue polypeptide: tRNA (guanine-N(7)-)-methyltransferase (393 aa).

3 residues coordinate S-adenosyl-L-methionine: Glu-124, Glu-149, and Asp-176. Asp-232 is a binding site for substrate.

The protein belongs to the class I-like SAM-binding methyltransferase superfamily. TrmB family.

The enzyme catalyses guanosine(46) in tRNA + S-adenosyl-L-methionine = N(7)-methylguanosine(46) in tRNA + S-adenosyl-L-homocysteine. It functions in the pathway tRNA modification; N(7)-methylguanine-tRNA biosynthesis. In terms of biological role, catalyzes the formation of N(7)-methylguanine at position 46 (m7G46) in tRNA. This Helicobacter pylori (strain ATCC 700392 / 26695) (Campylobacter pylori) protein is tRNA (guanine-N(7)-)-methyltransferase.